The primary structure comprises 621 residues: 1-deoxy-D-xylulose-5-phosphate synthase (621 aa).

Thiamine diphosphate contacts are provided by residues His80 and 121–123; that span reads GHS. Residue Asp152 participates in Mg(2+) binding. Thiamine diphosphate is bound by residues 153 to 154, Asn181, Tyr288, and Glu370; that span reads GA. Asn181 serves as a coordination point for Mg(2+).

Belongs to the transketolase family. DXPS subfamily. Homodimer. Requires Mg(2+) as cofactor. Thiamine diphosphate is required as a cofactor.

The enzyme catalyses D-glyceraldehyde 3-phosphate + pyruvate + H(+) = 1-deoxy-D-xylulose 5-phosphate + CO2. The protein operates within metabolic intermediate biosynthesis; 1-deoxy-D-xylulose 5-phosphate biosynthesis; 1-deoxy-D-xylulose 5-phosphate from D-glyceraldehyde 3-phosphate and pyruvate: step 1/1. Functionally, catalyzes the acyloin condensation reaction between C atoms 2 and 3 of pyruvate and glyceraldehyde 3-phosphate to yield 1-deoxy-D-xylulose-5-phosphate (DXP). The sequence is that of 1-deoxy-D-xylulose-5-phosphate synthase from Edwardsiella ictaluri (strain 93-146).